Here is a 1257-residue protein sequence, read N- to C-terminus: Elongation factor 2 (1257 aa).

Positions 273–402 (LAGLMFGDGC…LQLLLQKFDV (130 aa)) constitute a DOD-type homing endonuclease domain. The region spanning 541 to 782 (VEEHHNFAAE…MVVKHLPDPV (242 aa)) is the tr-type G domain. Residues 616-620 (DTPGH) and 670-673 (NKVD) contribute to the GTP site. His1120 is modified (diphthamide). Basic and acidic residues predominate over residues 1237 to 1250 (ERKGLKPEPPKPED). The interval 1237 to 1257 (ERKGLKPEPPKPEDYIEDYGG) is disordered.

It belongs to the TRAFAC class translation factor GTPase superfamily. Classic translation factor GTPase family. EF-G/EF-2 subfamily. This protein undergoes a protein self splicing that involves a post-translational excision of the intervening region (intein) followed by peptide ligation.

It localises to the cytoplasm. Its function is as follows. Catalyzes the GTP-dependent ribosomal translocation step during translation elongation. During this step, the ribosome changes from the pre-translocational (PRE) to the post-translocational (POST) state as the newly formed A-site-bound peptidyl-tRNA and P-site-bound deacylated tRNA move to the P and E sites, respectively. Catalyzes the coordinated movement of the two tRNA molecules, the mRNA and conformational changes in the ribosome. The sequence is that of Elongation factor 2 from Methanopyrus kandleri (strain AV19 / DSM 6324 / JCM 9639 / NBRC 100938).